The sequence spans 1377 residues: DNA-directed RNA polymerase subunit beta' (1377 aa).

Zn(2+) contacts are provided by C60, C62, C75, and C78. Mg(2+)-binding residues include D449, D451, and D453. Residues C777, C851, C858, and C861 each coordinate Zn(2+).

It belongs to the RNA polymerase beta' chain family. The RNAP catalytic core consists of 2 alpha, 1 beta, 1 beta' and 1 omega subunit. When a sigma factor is associated with the core the holoenzyme is formed, which can initiate transcription. Mg(2+) serves as cofactor. It depends on Zn(2+) as a cofactor.

It carries out the reaction RNA(n) + a ribonucleoside 5'-triphosphate = RNA(n+1) + diphosphate. Its function is as follows. DNA-dependent RNA polymerase catalyzes the transcription of DNA into RNA using the four ribonucleoside triphosphates as substrates. The polypeptide is DNA-directed RNA polymerase subunit beta' (Borreliella burgdorferi (strain ATCC 35210 / DSM 4680 / CIP 102532 / B31) (Borrelia burgdorferi)).